The chain runs to 697 residues: Polyribonucleotide nucleotidyltransferase (697 aa).

2 residues coordinate Mg(2+): Asp-487 and Asp-493. The 60-residue stretch at 554 to 613 folds into the KH domain; that stretch reads PRIETIQIKPSKIAVVIGPGGKQIRAIIEQTGVQIDIDDTGLVNIAAIDLVSIEKAKAII. The region spanning 623-691 is the S1 motif domain; that stretch reads GRIYSGKAIS…ERGQIKLSRK (69 aa).

Belongs to the polyribonucleotide nucleotidyltransferase family. The cofactor is Mg(2+).

It localises to the cytoplasm. The catalysed reaction is RNA(n+1) + phosphate = RNA(n) + a ribonucleoside 5'-diphosphate. In terms of biological role, involved in mRNA degradation. Catalyzes the phosphorolysis of single-stranded polyribonucleotides processively in the 3'- to 5'-direction. This Protochlamydia amoebophila (strain UWE25) protein is Polyribonucleotide nucleotidyltransferase.